The primary structure comprises 533 residues: Flavin-containing monooxygenase 5 (533 aa).

At Arg5 the chain carries Dimethylated arginine. FAD-binding positions include 10-14 (GGGVS), Glu33, and 41-42 (LW). Ser54 bears the Phosphoserine mark. Residue Tyr56 is modified to Phosphotyrosine. Ser58 bears the Phosphoserine mark. 62 to 63 (NT) contacts FAD. 196–199 (SGGD) contacts NADP(+). Position 280 is a phosphoserine (Ser280). The residue at position 284 (Thr284) is a Phosphothreonine. Ser401 is subject to Phosphoserine. A helical membrane pass occupies residues 510 to 530 (MVSAVTTGCFMLAVVFFAIIM).

It belongs to the FMO family. The cofactor is FAD. Expressed in liver.

The protein localises to the microsome membrane. It localises to the endoplasmic reticulum membrane. The catalysed reaction is N,N-dimethylaniline + NADPH + O2 + H(+) = N,N-dimethylaniline N-oxide + NADP(+) + H2O. The enzyme catalyses NADPH + O2 + H(+) = H2O2 + NADP(+). It catalyses the reaction heptan-2-one + NADPH + O2 + H(+) = pentyl acetate + NADP(+) + H2O. It carries out the reaction octan-3-one + NADPH + O2 + H(+) = pentyl propanoate + NADP(+) + H2O. The catalysed reaction is octan-3-one + NADPH + O2 + H(+) = ethyl hexanoate + NADP(+) + H2O. The enzyme catalyses hexan-3-one + NADPH + O2 + H(+) = ethyl butanoate + NADP(+) + H2O. It catalyses the reaction hexan-3-one + NADPH + O2 + H(+) = propyl propanoate + NADP(+) + H2O. It carries out the reaction heptan-4-one + NADPH + O2 + H(+) = propyl butanoate + NADP(+) + H2O. The catalysed reaction is (2E)-geranial + NADPH + O2 + H(+) = (1E)-2,6-dimethylhepta-1,5-dien-1-yl formate + NADP(+) + H2O. The enzyme catalyses sulcatone + NADPH + O2 + H(+) = 4-methylpent-3-en-1-yl acetate + NADP(+) + H2O. Acts as a Baeyer-Villiger monooxygenase on a broad range of substrates. Catalyzes the insertion of an oxygen atom into a carbon-carbon bond adjacent to a carbonyl, which converts ketones to esters. Active on diverse carbonyl compounds, whereas soft nucleophiles are mostly non- or poorly reactive. In contrast with other forms of FMO it is non- or poorly active on 'classical' substrates such as drugs, pesticides, and dietary components containing soft nucleophilic heteroatoms. Able to oxidize drug molecules bearing a carbonyl group on an aliphatic chain, such as nabumetone and pentoxifylline. Also, in the absence of substrates, shows slow but yet significant NADPH oxidase activity. Acts as a positive modulator of cholesterol biosynthesis as well as glucose homeostasis, promoting metabolic aging via pleiotropic effects. This chain is Flavin-containing monooxygenase 5 (FMO5), found in Cavia porcellus (Guinea pig).